The primary structure comprises 432 residues: MHATNSARLFERAGNVIPGGVNSPVRAFGSVGGTPRFIREASGYTLTDVDGNNYVDLVSSWGPMILGHAHPAVVEAVREAALGGLSFGAPTEGEVALAEEIVARVAPVEKVRLVNSGTEATMSAVRLARGFTGRTKIIKFSGCYHGHVDALLADAGSGLATFGLPTSPGVTGAQAEDTIVVRYNDLDAVAAAFAANPGAIACVITEAAAGNMGAVAPLPGFNEGLRRLTREHGALLIMDEVMTGFRVSASGWYGIDNVAGDLYTFGKVMSGGLPAAAFGGRADIMGHLAPDGPVYQAGTLSGNPVAVAAGLASLRAADAEVYAKLGRNATALGDLMTQALTAEGVEHRVQYAGTLVSVFFTENTVTNYDEAKAAQTWRFPAFFHALLSRGVYPPPSAFEAWFVSAALDDRAFSIIADAMPHAAKAAAAAVKP.

Lys-267 carries the post-translational modification N6-(pyridoxal phosphate)lysine.

Belongs to the class-III pyridoxal-phosphate-dependent aminotransferase family. HemL subfamily. In terms of assembly, homodimer. It depends on pyridoxal 5'-phosphate as a cofactor.

It is found in the cytoplasm. It catalyses the reaction (S)-4-amino-5-oxopentanoate = 5-aminolevulinate. It functions in the pathway porphyrin-containing compound metabolism; protoporphyrin-IX biosynthesis; 5-aminolevulinate from L-glutamyl-tRNA(Glu): step 2/2. This is Glutamate-1-semialdehyde 2,1-aminomutase from Rhodococcus erythropolis (strain PR4 / NBRC 100887).